Consider the following 209-residue polypeptide: Probable GTP-binding protein EngB (209 aa).

The EngB-type G domain maps to 12-203 (INLEIIFAGR…RDRLHEMKRD (192 aa)). Residues 20–27 (GRSNVGKS), 45–49 (GVTLR), 62–65 (DMPG), 142–145 (NKMD), and 179–181 (ISA) each bind GTP. Serine 27 and threonine 47 together coordinate Mg(2+).

It belongs to the TRAFAC class TrmE-Era-EngA-EngB-Septin-like GTPase superfamily. EngB GTPase family. It depends on Mg(2+) as a cofactor.

In terms of biological role, necessary for normal cell division and for the maintenance of normal septation. The protein is Probable GTP-binding protein EngB of Methanosarcina mazei (strain ATCC BAA-159 / DSM 3647 / Goe1 / Go1 / JCM 11833 / OCM 88) (Methanosarcina frisia).